Reading from the N-terminus, the 245-residue chain is MADS-box transcription factor 55 (245 aa).

Positions 1-61 constitute an MADS-box domain; the sequence is MARERREIRR…GKLSQFASSN (61 aa). The 91-residue stretch at 109–199 folds into the K-box domain; that stretch reads LQLEHSKCSS…RDQMPQVPTA (91 aa). A disordered region spans residues 197–245; the sequence is PTAGLAVPDTENVLTEDGQSSESVMTALNSGSSQDNDDGSDISLKLGLP. Residues 213-224 are compositionally biased toward polar residues; sequence DGQSSESVMTAL.

Expressed in roots, shoots and developing panicles. Expressed in shoots.

It is found in the nucleus. In terms of biological role, transcription factor that acts as a negative regulator of brassinosteroid signaling. This chain is MADS-box transcription factor 55 (MADS55), found in Oryza sativa subsp. japonica (Rice).